Here is a 742-residue protein sequence, read N- to C-terminus: 5-methyltetrahydropteroyltriglutamate--homocysteine methyltransferase (742 aa).

Residues Arg-18–Lys-21 and Lys-112 each bind 5-methyltetrahydropteroyltri-L-glutamate. Residues Ile-420 to Ser-422 and Glu-473 contribute to the L-homocysteine site. L-methionine contacts are provided by residues Ile-420–Ser-422 and Glu-473. Trp-550 is a binding site for 5-methyltetrahydropteroyltri-L-glutamate. Asp-588 lines the L-homocysteine pocket. Asp-588 contacts L-methionine. Glu-594 is a binding site for 5-methyltetrahydropteroyltri-L-glutamate. His-630, Cys-632, and Glu-654 together coordinate Zn(2+). Residue His-683 is the Proton donor of the active site. Position 715 (Cys-715) interacts with Zn(2+).

Belongs to the vitamin-B12 independent methionine synthase family. It depends on Zn(2+) as a cofactor.

It carries out the reaction 5-methyltetrahydropteroyltri-L-glutamate + L-homocysteine = tetrahydropteroyltri-L-glutamate + L-methionine. It functions in the pathway amino-acid biosynthesis; L-methionine biosynthesis via de novo pathway; L-methionine from L-homocysteine (MetE route): step 1/1. Its function is as follows. Catalyzes the transfer of a methyl group from 5-methyltetrahydrofolate to homocysteine resulting in methionine formation. The protein is 5-methyltetrahydropteroyltriglutamate--homocysteine methyltransferase of Staphylococcus aureus (strain USA300).